The chain runs to 635 residues: MASQYAAELCALLVEDNFGELFARIFSTLTRYDRLNLPRLKFHSGLSNRQLLPALAAMIQQHLVYHYTSYDDGVTYYEANLQSAYYLVRAGKILEFVEERLGKYAATVMSSIMYLGHAQVSHLENLPELQPEQSHTNGVDKEHDEVDGDEEQPNGLSGDHSDQQPALLHPTLKVLAAHGYIIRVREAQFQSHADNILDAERVLKSRPEIKAMKGKRMEEAVIEGTLELLKERTDGDLTRGLMVQGVPRGAKRKHGSKSADAPNKKARVDFASVDEDDEQDEEENEWSDDEMGYDTTPMESGLVVRVNYNKLDVALRNCRFIQIAEQDASPATAEVYECLLRRIEYQTHQCRDTVEIPREGEEGEQYSVPIALSAVAEDVDPRLDLSGSIGPMEISQPDNRRGKRPLEDDVNGTNHEGANGLSSGGNRTFEVDQHLCLLAQPPHNLTSKRIVSGLITWTVEFRHLARKLRHLELERMIEARYGDVALRVVRVLHAKGKLDEKRLQEISLLPFKDLRQVLASMQAGGFVDLQEVPRDAQRQPSRTIYLWYYDPDRICNSVLQDTYKAMSRCFQRLRFERNRLKEFLEKTERSDVKGNEERYLSEGELALLQQWKAKEALLIGEVARLDEMVAVMRDY.

Disordered regions lie at residues 131-164, 246-295, and 386-424; these read PEQS…SDQQ, VPRG…GYDT, and SGSI…LSSG. Positions 272–292 are enriched in acidic residues; that stretch reads SVDEDDEQDEEENEWSDDEMG. Over residues 398-407 the composition is skewed to basic and acidic residues; it reads DNRRGKRPLE. The span at 411 to 424 shows a compositional bias: polar residues; sequence NGTNHEGANGLSSG. Residues 562-583 form a leucine-zipper region; the sequence is TYKAMSRCFQRLRFERNRLKEF.

Belongs to the RNA polymerase beta chain family. Component of the RNA polymerase III (Pol III) complex consisting of 17 subunits.

Its subcellular location is the nucleus. DNA-dependent RNA polymerase catalyzes the transcription of DNA into RNA using the four ribonucleoside triphosphates as substrates. Specific core component of RNA polymerase III which synthesizes small RNAs, such as 5S rRNA and tRNAs. In Aspergillus clavatus (strain ATCC 1007 / CBS 513.65 / DSM 816 / NCTC 3887 / NRRL 1 / QM 1276 / 107), this protein is DNA-directed RNA polymerase III subunit rpc3 (rpc82).